The sequence spans 142 residues: Large ribosomal subunit protein uL11 (142 aa).

It belongs to the universal ribosomal protein uL11 family. In terms of assembly, part of the ribosomal stalk of the 50S ribosomal subunit. Interacts with L10 and the large rRNA to form the base of the stalk. L10 forms an elongated spine to which L12 dimers bind in a sequential fashion forming a multimeric L10(L12)X complex. Post-translationally, one or more lysine residues are methylated.

Its function is as follows. Forms part of the ribosomal stalk which helps the ribosome interact with GTP-bound translation factors. The protein is Large ribosomal subunit protein uL11 of Pelotomaculum thermopropionicum (strain DSM 13744 / JCM 10971 / SI).